We begin with the raw amino-acid sequence, 143 residues long: uncharacterized protein (143 aa).

It localises to the cytoplasm. It is found in the nucleus. This is an uncharacterized protein from Schizosaccharomyces pombe (strain 972 / ATCC 24843) (Fission yeast).